The chain runs to 173 residues: Protein tyrosine phosphatase type IVA 1 (173 aa).

The 154-residue stretch at 8–161 (APVEVTYKNM…YRPKMRLRFK (154 aa)) folds into the Tyrosine-protein phosphatase domain. C49 and C104 are joined by a disulfide. D72 serves as the catalytic Proton donor. An interaction with ATF5 region spans residues 97–132 (GCCIAVHCVAGLGRAPVLVALALIEGGMKYEDAVQF). The active-site Phosphocysteine intermediate is the C104. A phosphate-binding site is contributed by 105-110 (VAGLGR). R110 provides a ligand contact to substrate. Position 170 is a cysteine methyl ester (C170). C170 carries the S-farnesyl cysteine lipid modification. Residues 171-173 (CIQ) constitute a propeptide, removed in mature form.

It belongs to the protein-tyrosine phosphatase family. As to quaternary structure, homotrimer. Interacts with ATF5 and tubulin. In terms of processing, farnesylated. Farnesylation is required for membrane targeting.

It is found in the cell membrane. It localises to the early endosome. The protein localises to the endoplasmic reticulum. Its subcellular location is the cytoplasm. The protein resides in the cytoskeleton. It is found in the spindle. It localises to the nucleus. It carries out the reaction O-phospho-L-tyrosyl-[protein] + H2O = L-tyrosyl-[protein] + phosphate. Inhibited by sodium orthovanadate and pentamidine. Protein tyrosine phosphatase which stimulates progression from G1 into S phase during mitosis. May play a role in the development and maintenance of differentiating epithelial tissues. This Pongo abelii (Sumatran orangutan) protein is Protein tyrosine phosphatase type IVA 1 (PTP4A1).